The primary structure comprises 186 residues: Ribonuclease M5 (186 aa).

One can recognise a Toprim domain in the interval 6–89 (SQVIVVEGRD…AFLKRDEAVP (84 aa)). Residues Glu-12, Asp-58, and Asp-60 each coordinate Mg(2+).

This sequence belongs to the ribonuclease M5 family. Mg(2+) is required as a cofactor.

The protein resides in the cytoplasm. It carries out the reaction Endonucleolytic cleavage of RNA, removing 21 and 42 nucleotides, respectively, from the 5'- and 3'-termini of a 5S-rRNA precursor.. Required for correct processing of both the 5' and 3' ends of 5S rRNA precursor. Cleaves both sides of a double-stranded region yielding mature 5S rRNA in one step. This Streptococcus pneumoniae (strain ATCC BAA-255 / R6) protein is Ribonuclease M5.